The chain runs to 96 residues: Small ribosomal subunit protein bS18 (96 aa).

Positions 1–22 (MYKDVDSHQRDSRSDGHQDGFK) are enriched in basic and acidic residues. A disordered region spans residues 1 to 25 (MYKDVDSHQRDSRSDGHQDGFKKNP).

It belongs to the bacterial ribosomal protein bS18 family. Part of the 30S ribosomal subunit. Forms a tight heterodimer with protein bS6.

In terms of biological role, binds as a heterodimer with protein bS6 to the central domain of the 16S rRNA, where it helps stabilize the platform of the 30S subunit. In Borrelia hermsii (strain HS1 / DAH), this protein is Small ribosomal subunit protein bS18.